Consider the following 568-residue polypeptide: Potassium-transporting ATPase potassium-binding subunit (568 aa).

The next 12 helical transmembrane spans lie at 7-27 (LLITSFLLILMLLAKPLGNII), 67-87 (YALAITIFNLTGLLLLFTLLV), 137-157 (GLTVQNFLSAATGIAVAFALI), 180-200 (LYLLLPLSMVIALVFVSQGVI), 258-278 (FIQILSIFLIPCALCFAFGQV), 288-308 (LLWAMSIIFVIATVGVMYAEL), 332-352 (FGILATSIYAVVTTAASCGAV), 361-381 (ALGGMIPMWLIQIGEVVFGGV), 384-404 (GLYGMLLFVLLTVFIAGLMIG), 421-441 (MVALAILVTPTLALLGTALTI), 488-508 (LLLAIILFLGRFGMILPVLAI), and 535-555 (LLILTIMLIGALTFIPALILG).

Belongs to the KdpA family. In terms of assembly, the system is composed of three essential subunits: KdpA, KdpB and KdpC.

The protein resides in the cell inner membrane. Functionally, part of the high-affinity ATP-driven potassium transport (or Kdp) system, which catalyzes the hydrolysis of ATP coupled with the electrogenic transport of potassium into the cytoplasm. This subunit binds the periplasmic potassium ions and delivers the ions to the membrane domain of KdpB through an intramembrane tunnel. This Photorhabdus laumondii subsp. laumondii (strain DSM 15139 / CIP 105565 / TT01) (Photorhabdus luminescens subsp. laumondii) protein is Potassium-transporting ATPase potassium-binding subunit.